Consider the following 231-residue polypeptide: Glutathione-S-transferase (231 aa).

The 84-residue stretch at 15 to 98 (LFAVKGTATS…YIADAYDKDG (84 aa)) folds into the GST N-terminal domain.

This sequence belongs to the GST superfamily.

It catalyses the reaction RX + glutathione = an S-substituted glutathione + a halide anion + H(+). Functionally, conjugation of reduced glutathione to a wide number of exogenous and endogenous hydrophobic electrophiles. The chain is Glutathione-S-transferase from Alternaria alternata (Alternaria rot fungus).